The following is a 224-amino-acid chain: uncharacterized protein (224 aa).

The stretch at 108–137 (QLALDRAELNESIRATNENLALQYSKLQTE) forms a coiled coil.

This is an uncharacterized protein from Human picobirnavirus (strain Human/Thailand/Hy005102/-) (PBV).